A 184-amino-acid polypeptide reads, in one-letter code: Adenine phosphoribosyltransferase (184 aa).

The protein belongs to the purine/pyrimidine phosphoribosyltransferase family. Homodimer.

It localises to the cytoplasm. The catalysed reaction is AMP + diphosphate = 5-phospho-alpha-D-ribose 1-diphosphate + adenine. It functions in the pathway purine metabolism; AMP biosynthesis via salvage pathway; AMP from adenine: step 1/1. Its function is as follows. Catalyzes a salvage reaction resulting in the formation of AMP, that is energically less costly than de novo synthesis. The sequence is that of Adenine phosphoribosyltransferase from Myxococcus xanthus (strain DK1622).